Reading from the N-terminus, the 1026-residue chain is Multidrug resistance protein MdtC (1026 aa).

11 consecutive transmembrane segments (helical) span residues 16–36, 333–353, 360–380, 387–407, 435–455, 459–479, 528–548, 853–873, 897–917, 953–973, and 984–1004; these read LLAL…PVAP, EVEQ…FLFL, LIPA…IYLC, LSLM…IVVL, VFSI…MGGI, LFHE…LIAL, WVLL…ISIP, LLLI…LYES, LFNA…IGLV, PILM…FSYG, and ITIV…TPVV.

This sequence belongs to the resistance-nodulation-cell division (RND) (TC 2.A.6) family. MdtC subfamily. In terms of assembly, part of a tripartite efflux system composed of MdtA, MdtB and MdtC. MdtC forms a heteromultimer with MdtB.

The protein localises to the cell inner membrane. The chain is Multidrug resistance protein MdtC from Edwardsiella ictaluri (strain 93-146).